The chain runs to 309 residues: MPVYNKEELVRFVEEAKQYARYGKVADYIPALGKANPNELSIAVYTADGKVVDAGDVTVKVTLQSISKILALALVLIDRGEDEVFRKVGMEPTGDPFNSIAKLEEVQPSKPLNPMINAGALAVTHMIRGRSVEERLERLLAFIRRLAGNEQITYSEEVAQSEFETAFLNRSLCYFLKQHGIIDEDVEELMDLYTKQCAVEMTCIDLARIGLVFALDGRDPHSGELLMPLDVARICKTFMVTCGMYNASGEFAIKIGIPAKSGVSGGILAAVPGRCGIGIFGPALDDKGNSLTGVKLLERLSKTYSLSIF.

Substrate contacts are provided by Ser-65, Asn-117, Glu-162, Asn-169, Tyr-193, Tyr-245, and Val-263.

The protein belongs to the glutaminase family. In terms of assembly, homotetramer.

The enzyme catalyses L-glutamine + H2O = L-glutamate + NH4(+). The protein is Glutaminase of Geobacillus thermodenitrificans (strain NG80-2).